The chain runs to 301 residues: MSVRELVVLGTASQVPTRHRNHNGYLLRWDGEGILFDPGEGTQRQMLRAGVAAHDLNRICVTHFHGDHSLGLAGVIQRINLDRVPHEITAHYPRSGQRFFERLRYATAYRETVALTEVPVAADGPLAVTPAYTLDARRLSHPVESYGYRLTEPDGRRMLPERLAAHGITGPDVGRIQRDGSLGGVALDEVSEVRRGQRFAFVMDTRLCEGVHALAEDSDLLVIESTFLDEDETLATDHGHLTAGQAARVARDAGVRHLVLTHFSQRYSDPEEFGRQARAAGYAGELTVARDLTRVPVPKRR.

His63, His65, Asp67, His68, His141, Asp204, and His262 together coordinate Zn(2+). The active-site Proton acceptor is Asp67.

It belongs to the RNase Z family. Homodimer. The cofactor is Zn(2+).

The enzyme catalyses Endonucleolytic cleavage of RNA, removing extra 3' nucleotides from tRNA precursor, generating 3' termini of tRNAs. A 3'-hydroxy group is left at the tRNA terminus and a 5'-phosphoryl group is left at the trailer molecule.. In terms of biological role, zinc phosphodiesterase, which displays some tRNA 3'-processing endonuclease activity. Probably involved in tRNA maturation, by removing a 3'-trailer from precursor tRNA. The chain is Ribonuclease Z from Streptomyces coelicolor (strain ATCC BAA-471 / A3(2) / M145).